Here is a 314-residue protein sequence, read N- to C-terminus: Olfactory receptor 6C6 (314 aa).

Over 1-24 the chain is Extracellular; it reads MKNKSMEIEFILLGLTDDPQLQIV. Asn-3 carries an N-linked (GlcNAc...) asparagine glycan. Residues 25–45 traverse the membrane as a helical segment; the sequence is IFLFLFLNYTLSLMGNLIIII. Over 46-63 the chain is Cytoplasmic; the sequence is LTLLDPRLKTPMYFFLRN. Residues 64–84 form a helical membrane-spanning segment; that stretch reads FSFLEVIFTTVCIPRFLITIV. The Extracellular segment spans residues 85 to 95; sequence TRDKTISYNNC. Cys-95 and Cys-177 form a disulfide bridge. Residues 96–116 traverse the membrane as a helical segment; it reads ATQLFFILLPGVTEFYLLAAM. At 117 to 141 the chain is on the cytoplasmic side; that stretch reads SYDRYVAICKPLHYPIIMSSKVCYQ. The chain crosses the membrane as a helical span at residues 142–162; that stretch reads LVLSSWVTGFLIIFPPLVMGL. Over 163–199 the chain is Extracellular; it reads KLDFCASKTIDHFMCETSPILQISCTDTHVLELMSFT. The helical transmembrane segment at 200–220 threads the bilayer; sequence LAVVTLVVTLVLVILSYTCII. Residues 221 to 237 are Cytoplasmic-facing; sequence KTILKFSSAQQRNKAFS. A helical membrane pass occupies residues 238 to 258; the sequence is TCTSHMIVVSMTYGSCIFMYI. At 259-269 the chain is on the extracellular side; the sequence is KPSAKERVTVS. The chain crosses the membrane as a helical span at residues 270–290; that stretch reads KGVALLYTSIAPLLNPFIYTL. At 291 to 314 the chain is on the cytoplasmic side; sequence RNQQVKEVFWDVLQKNLCFSKRPF.

This sequence belongs to the G-protein coupled receptor 1 family.

The protein localises to the cell membrane. Its function is as follows. Odorant receptor. The polypeptide is Olfactory receptor 6C6 (OR6C6) (Homo sapiens (Human)).